Here is a 109-residue protein sequence, read N- to C-terminus: Putative double-stranded DNA mimic protein YciU (109 aa).

It belongs to the putative dsDNA mimic protein family.

Functionally, may act as a double-stranded DNA (dsDNA) mimic. Probably regulates the activity of a dsDNA-binding protein. The chain is Putative double-stranded DNA mimic protein YciU from Shigella boydii serotype 18 (strain CDC 3083-94 / BS512).